The following is a 376-amino-acid chain: Guanine nucleotide-binding protein G(s) subunit alpha (376 aa).

Glycine 2 carries the N-palmitoyl glycine lipid modification. Cysteine 3 carries the S-palmitoyl cysteine lipid modification. The G-alpha domain occupies glycine 36–leucine 376. The segment at arginine 39–threonine 52 is G1 motif. Residues glycine 44–serine 51, leucine 180–threonine 186, aspartate 205–glutamine 209, asparagine 274–aspartate 277, and alanine 348 each bind GTP. Residues serine 51 and threonine 186 each coordinate Mg(2+). Residues aspartate 178–threonine 186 are G2 motif. A G3 motif region spans residues phenylalanine 201–arginine 210. The G4 motif stretch occupies residues isoleucine 270–aspartate 277. Positions threonine 346–threonine 351 are G5 motif.

It belongs to the G-alpha family. G(s) subfamily. In terms of assembly, g proteins are composed of 3 units; alpha, beta and gamma. The alpha chain contains the guanine nucleotide binding site.

In terms of biological role, guanine nucleotide-binding proteins (G proteins) are involved as modulators or transducers in various transmembrane signaling systems. The G(s) protein is involved in hormonal regulation of adenylate cyclase: it activates the cyclase in response to beta-adrenergic stimuli. This is Guanine nucleotide-binding protein G(s) subunit alpha from Lymnaea stagnalis (Great pond snail).